The chain runs to 436 residues: Probable D-serine dehydratase (436 aa).

Lys-111 carries the post-translational modification N6-(pyridoxal phosphate)lysine.

This sequence belongs to the serine/threonine dehydratase family. DsdA subfamily. Pyridoxal 5'-phosphate serves as cofactor.

It carries out the reaction D-serine = pyruvate + NH4(+). The protein is Probable D-serine dehydratase of Lactiplantibacillus plantarum (strain ATCC BAA-793 / NCIMB 8826 / WCFS1) (Lactobacillus plantarum).